The sequence spans 123 residues: Large ribosomal subunit protein bL12 (123 aa).

This sequence belongs to the bacterial ribosomal protein bL12 family. Homodimer. Part of the ribosomal stalk of the 50S ribosomal subunit. Forms a multimeric L10(L12)X complex, where L10 forms an elongated spine to which 2 to 4 L12 dimers bind in a sequential fashion. Binds GTP-bound translation factors.

Functionally, forms part of the ribosomal stalk which helps the ribosome interact with GTP-bound translation factors. Is thus essential for accurate translation. The chain is Large ribosomal subunit protein bL12 from Clostridium kluyveri (strain NBRC 12016).